A 370-amino-acid chain; its full sequence is NSFL1 cofactor p47 (370 aa).

A disordered region spans residues Ser54–Thr73. Phosphoserine is present on residues Ser74, Ser102, and Ser114. 2 disordered regions span residues His80 to Asn116 and Thr138 to Leu157. A Nuclear localization signal motif is present at residues Pro109 to Pro115. The residue at position 140 (Ser140) is a Phosphoserine; by CDK1. Tyr167 is subject to Phosphotyrosine. A Nuclear localization signal motif is present at residues Arg172–His175. Phosphoserine is present on residues Ser176, Ser192, and Ser272. The region spanning Asp179–Val244 is the SEP domain. The region spanning Glu291–Arg368 is the UBX domain.

It belongs to the NSFL1C family. Part of a ternary complex containing STX5A, NSFL1C and VCP. NSFL1C forms a homotrimer that binds to one end of a VCP homohexamer. The complex binds to membranes enriched in phosphatidylethanolamine-containing lipids and promotes Golgi membrane fusion. Interaction with VCIP135 leads to dissociation of the complex via ATP hydrolysis by VCP. Binds ubiquitin and mono-ubiquitinated proteins via its N-terminal UBA-like domain when bound to VCP. In terms of processing, phosphorylated during mitosis. Phosphorylation inhibits interaction with Golgi membranes and is required for the fragmentation of the Golgi stacks during mitosis. Highly expressed in heart, brain, spleen, lung, liver, muscle, kidney and testis.

It is found in the nucleus. It localises to the golgi apparatus. Its subcellular location is the golgi stack. The protein resides in the chromosome. The protein localises to the cytoplasm. It is found in the cytoskeleton. It localises to the microtubule organizing center. Its subcellular location is the centrosome. Reduces the ATPase activity of VCP. Necessary for the fragmentation of Golgi stacks during mitosis and for VCP-mediated reassembly of Golgi stacks after mitosis. May play a role in VCP-mediated formation of transitional endoplasmic reticulum (tER). Inhibits the activity of CTSL (in vitro). Together with UBXN2B/p37, regulates the centrosomal levels of kinase AURKA/Aurora A during mitotic progression by promoting AURKA removal from centrosomes in prophase. Also, regulates spindle orientation during mitosis. This Rattus norvegicus (Rat) protein is NSFL1 cofactor p47 (Nsfl1c).